The chain runs to 227 residues: RNA pyrophosphohydrolase (227 aa).

The region spanning glycine 6–threonine 149 is the Nudix hydrolase domain. Residues glycine 38 to glycine 59 carry the Nudix box motif. The disordered stretch occupies residues proline 165–aspartate 227. Positions alanine 192–aspartate 201 are enriched in low complexity. Residues threonine 217–aspartate 227 are compositionally biased toward polar residues.

The protein belongs to the Nudix hydrolase family. RppH subfamily. It depends on a divalent metal cation as a cofactor.

Accelerates the degradation of transcripts by removing pyrophosphate from the 5'-end of triphosphorylated RNA, leading to a more labile monophosphorylated state that can stimulate subsequent ribonuclease cleavage. The sequence is that of RNA pyrophosphohydrolase from Cupriavidus taiwanensis (strain DSM 17343 / BCRC 17206 / CCUG 44338 / CIP 107171 / LMG 19424 / R1) (Ralstonia taiwanensis (strain LMG 19424)).